We begin with the raw amino-acid sequence, 159 residues long: ATP synthase subunit b (159 aa).

Residues 2 to 22 (NISIPQIIAAILNFIILLLIV) form a helical membrane-spanning segment.

The protein belongs to the ATPase B chain family. As to quaternary structure, F-type ATPases have 2 components, F(1) - the catalytic core - and F(0) - the membrane proton channel. F(1) has five subunits: alpha(3), beta(3), gamma(1), delta(1), epsilon(1). F(0) has three main subunits: a(1), b(2) and c(10-14). The alpha and beta chains form an alternating ring which encloses part of the gamma chain. F(1) is attached to F(0) by a central stalk formed by the gamma and epsilon chains, while a peripheral stalk is formed by the delta and b chains.

Its subcellular location is the cell membrane. F(1)F(0) ATP synthase produces ATP from ADP in the presence of a proton or sodium gradient. F-type ATPases consist of two structural domains, F(1) containing the extramembraneous catalytic core and F(0) containing the membrane proton channel, linked together by a central stalk and a peripheral stalk. During catalysis, ATP synthesis in the catalytic domain of F(1) is coupled via a rotary mechanism of the central stalk subunits to proton translocation. Its function is as follows. Component of the F(0) channel, it forms part of the peripheral stalk, linking F(1) to F(0). This is ATP synthase subunit b from Clostridium botulinum (strain ATCC 19397 / Type A).